We begin with the raw amino-acid sequence, 116 residues long: Large ribosomal subunit protein uL18 (116 aa).

It belongs to the universal ribosomal protein uL18 family. As to quaternary structure, part of the 50S ribosomal subunit; part of the 5S rRNA/L5/L18/L25 subcomplex. Contacts the 5S and 23S rRNAs.

Functionally, this is one of the proteins that bind and probably mediate the attachment of the 5S RNA into the large ribosomal subunit, where it forms part of the central protuberance. In Shewanella woodyi (strain ATCC 51908 / MS32), this protein is Large ribosomal subunit protein uL18.